Reading from the N-terminus, the 276-residue chain is Large ribosomal subunit protein uL2 (276 aa).

Disordered stretches follow at residues 34–55 (LQPL…RHQG) and 221–276 (RGSV…RRTK). Residues 37–48 (LKNNAGRNNNGR) show a composition bias toward polar residues.

The protein belongs to the universal ribosomal protein uL2 family. In terms of assembly, part of the 50S ribosomal subunit. Forms a bridge to the 30S subunit in the 70S ribosome.

In terms of biological role, one of the primary rRNA binding proteins. Required for association of the 30S and 50S subunits to form the 70S ribosome, for tRNA binding and peptide bond formation. It has been suggested to have peptidyltransferase activity; this is somewhat controversial. Makes several contacts with the 16S rRNA in the 70S ribosome. This chain is Large ribosomal subunit protein uL2, found in Enterococcus faecalis (strain ATCC 700802 / V583).